A 187-amino-acid polypeptide reads, in one-letter code: UPF0301 protein CKO_04323 (187 aa).

Belongs to the UPF0301 (AlgH) family.

The polypeptide is UPF0301 protein CKO_04323 (Citrobacter koseri (strain ATCC BAA-895 / CDC 4225-83 / SGSC4696)).